A 101-amino-acid chain; its full sequence is uncharacterized protein (101 aa).

The segment covering 65–79 (QEAAAPAGPQEPAEA) has biased composition (low complexity). Positions 65–101 (QEAAAPAGPQEPAEASGDAGKKEEVEEEEIEIDFGMF) are disordered. A compositionally biased stretch (acidic residues) spans 89–101 (VEEEEIEIDFGMF).

This is an uncharacterized protein from Encephalitozoon cuniculi (strain GB-M1) (Microsporidian parasite).